Reading from the N-terminus, the 657-residue chain is Threonine--tRNA ligase (657 aa).

Positions 7-70 constitute a TGS domain; that stretch reads QQASIAITLP…LCDANIEIVT (64 aa). Residues 253–555 form a catalytic region; it reads DHRKLGTELE…LIEHTAGNFP (303 aa). 3 residues coordinate Zn(2+): cysteine 351, histidine 402, and histidine 532.

Belongs to the class-II aminoacyl-tRNA synthetase family. In terms of assembly, homodimer. Zn(2+) serves as cofactor.

The protein localises to the cytoplasm. It catalyses the reaction tRNA(Thr) + L-threonine + ATP = L-threonyl-tRNA(Thr) + AMP + diphosphate + H(+). Catalyzes the attachment of threonine to tRNA(Thr) in a two-step reaction: L-threonine is first activated by ATP to form Thr-AMP and then transferred to the acceptor end of tRNA(Thr). Also edits incorrectly charged L-seryl-tRNA(Thr). In Chlorobium limicola (strain DSM 245 / NBRC 103803 / 6330), this protein is Threonine--tRNA ligase.